Consider the following 154-residue polypeptide: Superoxide dismutase [Cu-Zn] (154 aa).

Lysine 19 participates in a covalent cross-link: Glycyl lysine isopeptide (Lys-Gly) (interchain with G-Cter in SUMO). A phosphoserine mark is found at serine 26 and serine 39. Glutamate 43 is a binding site for Zn(2+). Cu cation-binding residues include histidine 47, histidine 49, and histidine 64. A disulfide bond links cysteine 58 and cysteine 147. Histidine 64 lines the Zn(2+) pocket. Lysine 70 is covalently cross-linked (Glycyl lysine isopeptide (Lys-Gly) (interchain with G-Cter in SUMO)). Residues histidine 72, histidine 81, and aspartate 84 each coordinate Zn(2+). Phosphoserine is present on residues serine 99 and serine 117. Histidine 121 is a binding site for Cu cation. Threonine 132 and threonine 138 each carry phosphothreonine. Position 144 (arginine 144) interacts with substrate.

Belongs to the Cu-Zn superoxide dismutase family. In terms of assembly, homodimer in holo form. In apo form, heterodimer with CCS1. Zinc-binding at 'His-16' of CCS1 and Glu-43 of apo-SOD1 is required for this heterodimerization. Requires Cu cation as cofactor. Zn(2+) is required as a cofactor.

Its subcellular location is the cytoplasm. The protein localises to the mitochondrion intermembrane space. It catalyses the reaction 2 superoxide + 2 H(+) = H2O2 + O2. In terms of biological role, destroys radicals which are normally produced within the cells and which are toxic to biological systems. This chain is Superoxide dismutase [Cu-Zn], found in Saccharomyces cerevisiae (strain ATCC 204508 / S288c) (Baker's yeast).